A 227-amino-acid polypeptide reads, in one-letter code: NAD(P)H-quinone oxidoreductase subunit K, chloroplastic (227 aa).

Residues cysteine 43, cysteine 44, cysteine 108, and cysteine 139 each contribute to the [4Fe-4S] cluster site.

The protein belongs to the complex I 20 kDa subunit family. In terms of assembly, NDH is composed of at least 16 different subunits, 5 of which are encoded in the nucleus. The cofactor is [4Fe-4S] cluster.

The protein resides in the plastid. It localises to the chloroplast thylakoid membrane. It catalyses the reaction a plastoquinone + NADH + (n+1) H(+)(in) = a plastoquinol + NAD(+) + n H(+)(out). The catalysed reaction is a plastoquinone + NADPH + (n+1) H(+)(in) = a plastoquinol + NADP(+) + n H(+)(out). NDH shuttles electrons from NAD(P)H:plastoquinone, via FMN and iron-sulfur (Fe-S) centers, to quinones in the photosynthetic chain and possibly in a chloroplast respiratory chain. The immediate electron acceptor for the enzyme in this species is believed to be plastoquinone. Couples the redox reaction to proton translocation, and thus conserves the redox energy in a proton gradient. This chain is NAD(P)H-quinone oxidoreductase subunit K, chloroplastic, found in Citrus sinensis (Sweet orange).